Here is a 328-residue protein sequence, read N- to C-terminus: Malate dehydrogenase (328 aa).

NAD(+) is bound at residue 11-17 (GAAGQIG). 2 residues coordinate substrate: Arg92 and Arg98. NAD(+) contacts are provided by residues Asn105, Gln112, and 129–131 (VGN). Residues Asn131 and Arg162 each contribute to the substrate site. His187 (proton acceptor) is an active-site residue.

The protein belongs to the LDH/MDH superfamily. MDH type 2 family.

The catalysed reaction is (S)-malate + NAD(+) = oxaloacetate + NADH + H(+). Catalyzes the reversible oxidation of malate to oxaloacetate. The polypeptide is Malate dehydrogenase (Coxiella burnetii (strain CbuG_Q212) (Coxiella burnetii (strain Q212))).